We begin with the raw amino-acid sequence, 612 residues long: Serine/threonine-protein kinase Nek1 (612 aa).

The Protein kinase domain maps to 4–258 (YEFLEQIGKG…ASDLLRHPHL (255 aa)). ATP is bound by residues 10 to 18 (IGKGSFGSA) and Lys-33. Asp-129 serves as the catalytic Proton acceptor. The segment covering 503 to 513 (ISDGSSSSDQN) has biased composition (polar residues). The interval 503–534 (ISDGSSSSDQNATAGASSHTTSSSSRRCRFDP) is disordered. Over residues 514–527 (ATAGASSHTTSSSS) the composition is skewed to low complexity.

Belongs to the protein kinase superfamily. NEK Ser/Thr protein kinase family. NIMA subfamily.

It catalyses the reaction L-seryl-[protein] + ATP = O-phospho-L-seryl-[protein] + ADP + H(+). The enzyme catalyses L-threonyl-[protein] + ATP = O-phospho-L-threonyl-[protein] + ADP + H(+). Functionally, may be involved in plant development processes. The polypeptide is Serine/threonine-protein kinase Nek1 (NEK1) (Arabidopsis thaliana (Mouse-ear cress)).